Consider the following 185-residue polypeptide: Adenine phosphoribosyltransferase (185 aa).

Belongs to the purine/pyrimidine phosphoribosyltransferase family. As to quaternary structure, homodimer.

It is found in the cytoplasm. It carries out the reaction AMP + diphosphate = 5-phospho-alpha-D-ribose 1-diphosphate + adenine. It participates in purine metabolism; AMP biosynthesis via salvage pathway; AMP from adenine: step 1/1. Functionally, catalyzes a salvage reaction resulting in the formation of AMP, that is energically less costly than de novo synthesis. This Pectobacterium atrosepticum (strain SCRI 1043 / ATCC BAA-672) (Erwinia carotovora subsp. atroseptica) protein is Adenine phosphoribosyltransferase.